A 536-amino-acid chain; its full sequence is Phosphoenolpyruvate carboxykinase (ATP) (536 aa).

The substrate site is built by arginine 61, tyrosine 195, and lysine 201. ATP contacts are provided by residues lysine 201, histidine 220, and 236-244; that span reads GLSGTGKTT. Residues lysine 201 and histidine 220 each contribute to the Mn(2+) site. Aspartate 257 is a Mn(2+) binding site. 3 residues coordinate ATP: glutamate 285, arginine 322, and threonine 447. Arginine 322 serves as a coordination point for substrate.

This sequence belongs to the phosphoenolpyruvate carboxykinase (ATP) family. Mn(2+) is required as a cofactor.

Its subcellular location is the cytoplasm. It carries out the reaction oxaloacetate + ATP = phosphoenolpyruvate + ADP + CO2. Its pathway is carbohydrate biosynthesis; gluconeogenesis. Its function is as follows. Involved in the gluconeogenesis. Catalyzes the conversion of oxaloacetate (OAA) to phosphoenolpyruvate (PEP) through direct phosphoryl transfer between the nucleoside triphosphate and OAA. This is Phosphoenolpyruvate carboxykinase (ATP) from Chelativorans sp. (strain BNC1).